The primary structure comprises 312 residues: Phospholipid phosphatase 3 (312 aa).

Over methionine 1–arginine 33 the chain is Cytoplasmic. Serine 19 carries the post-translational modification Phosphoserine. A helical membrane pass occupies residues valine 34–isoleucine 54. Residues glutamate 55–aspartate 85 are Extracellular-facing. Residues alanine 86–tyrosine 106 form a helical membrane-spanning segment. Over arginine 107–tyrosine 123 the chain is Cytoplasmic. A Dityrosine basolateral targeting motif motif is present at residues tyrosine 109–tyrosine 110. A helical membrane pass occupies residues valine 124–phenylalanine 144. The Extracellular segment spans residues threonine 145–lysine 194. Residues lysine 149 to proline 157 are phosphatase sequence motif I. Asparagine 171 carries an N-linked (GlcNAc...) asparagine glycan. An Integrin-binding motif motif is present at residues arginine 183–glutamate 185. The chain crosses the membrane as a helical span at residues serine 195–leucine 215. The tract at residues phenylalanine 197–histidine 200 is phosphatase sequence motif II. Catalysis depends on histidine 200, which acts as the Proton donors. At glutamine 216–leucine 226 the chain is on the cytoplasmic side. A helical transmembrane segment spans residues leucine 227–leucine 244. Residues serine 245–aspartate 256 form a phosphatase sequence motif III region. At serine 245–leucine 258 the chain is on the extracellular side. The active-site Nucleophile is the histidine 252. A helical membrane pass occupies residues alanine 259–phenylalanine 279. The segment at serine 276–valine 312 is mediates interaction with CTNND1. Residues lysine 280–valine 312 are Cytoplasmic-facing.

Belongs to the PA-phosphatase related phosphoesterase family. Forms functional homodimers and homooligomers that are not required for substrate recognition and catalytic activity. Can also form heterooligomers with other PLPP2 and PLPP3. Interacts with CTNND1; negatively regulates the PLPP3-mediated stabilization of beta-catenin/CTNNB1. In terms of processing, N-glycosylated. Contains high-mannose oligosaccharides. In terms of tissue distribution, detected in lung, cerebellum and heart atrium.

The protein resides in the cell membrane. It is found in the basolateral cell membrane. It localises to the endoplasmic reticulum membrane. The protein localises to the endoplasmic reticulum-Golgi intermediate compartment membrane. Its subcellular location is the golgi apparatus membrane. The protein resides in the golgi apparatus. It is found in the trans-Golgi network membrane. It localises to the membrane raft. It carries out the reaction a 1,2-diacyl-sn-glycero-3-phosphate + H2O = a 1,2-diacyl-sn-glycerol + phosphate. The catalysed reaction is 1,2-dihexadecanoyl-sn-glycero-3-phosphate + H2O = 1,2-dihexadecanoyl-sn-glycerol + phosphate. It catalyses the reaction 1,2-di-(9Z-octadecenoyl)-sn-glycero-3-phosphate + H2O = 1,2-di-(9Z-octadecenoyl)-sn-glycerol + phosphate. The enzyme catalyses a monoacyl-sn-glycero-3-phosphate + H2O = a monoacylglycerol + phosphate. It carries out the reaction (9Z)-octadecenoyl-sn-glycero-3-phosphate + H2O = (9Z-octadecenoyl)-glycerol + phosphate. The catalysed reaction is sphing-4-enine 1-phosphate + H2O = sphing-4-enine + phosphate. It catalyses the reaction an N-acylsphing-4-enine 1-phosphate + H2O = an N-acylsphing-4-enine + phosphate. The enzyme catalyses N-(octanoyl)-sphing-4-enine-1-phosphate + H2O = N-octanoylsphing-4-enine + phosphate. It carries out the reaction N-(9Z-octadecenoyl)-ethanolamine phosphate + H2O = N-(9Z-octadecenoyl) ethanolamine + phosphate. Its pathway is lipid metabolism; phospholipid metabolism. With respect to regulation, magnesium-independent phospholipid phosphatase. Insensitive to N-ethylmaleimide. Functionally, magnesium-independent phospholipid phosphatase of the plasma membrane that catalyzes the dephosphorylation of a variety of glycerolipid and sphingolipid phosphate esters including phosphatidate/PA, lysophosphatidate/LPA, diacylglycerol pyrophosphate/DGPP, sphingosine 1-phosphate/S1P and ceramide 1-phosphate/C1P. Also acts on N-oleoyl ethanolamine phosphate/N-(9Z-octadecenoyl)-ethanolamine phosphate, a potential physiological compound. Has both an extracellular and an intracellular phosphatase activity, allowing the hydrolysis and the cellular uptake of these bioactive lipid mediators from the milieu, regulating signal transduction in different cellular processes. Through the dephosphorylation of extracellular sphingosine-1-phosphate and the regulation of its extra- and intracellular availability, plays a role in vascular homeostasis, regulating endothelial cell migration, adhesion, survival, proliferation and the production of pro-inflammatory cytokines. By maintaining the appropriate levels of this lipid in the cerebellum, also ensure its proper development and function. Through its intracellular lipid phosphatase activity may act in early compartments of the secretory pathway, regulating the formation of Golgi to endoplasmic reticulum retrograde transport carriers. Its function is as follows. Independently of this phosphatase activity may also function in the Wnt signaling pathway and the stabilization of beta-catenin/CTNNB1, thereby regulating cell proliferation, migration and differentiation in angiogenesis or yet in tumor growth. Also plays a role in integrin-mediated cell-cell adhesion in angiogenesis. In Mus musculus (Mouse), this protein is Phospholipid phosphatase 3.